The following is a 177-amino-acid chain: Protein-export protein SecB (177 aa).

It belongs to the SecB family. In terms of assembly, homotetramer, a dimer of dimers. One homotetramer interacts with 1 SecA dimer.

It is found in the cytoplasm. One of the proteins required for the normal export of preproteins out of the cell cytoplasm. It is a molecular chaperone that binds to a subset of precursor proteins, maintaining them in a translocation-competent state. It also specifically binds to its receptor SecA. The chain is Protein-export protein SecB from Ehrlichia canis (strain Jake).